A 457-amino-acid chain; its full sequence is Bifunctional protein GlmU (457 aa).

Positions 1-230 (MSKRYAVVLA…FEESLGVNDR (230 aa)) are pyrophosphorylase. UDP-N-acetyl-alpha-D-glucosamine is bound by residues 9 to 12 (LAAG), Lys-23, Gln-73, and 78 to 79 (GT). Asp-103 is a Mg(2+) binding site. Positions 140, 155, 170, and 228 each coordinate UDP-N-acetyl-alpha-D-glucosamine. Position 228 (Asn-228) interacts with Mg(2+). Positions 231–251 (IALAEASRLMQRRINENHMRN) are linker. The tract at residues 252–457 (GVTLVNPENT…GYAKHLNHGK (206 aa)) is N-acetyltransferase. Arg-333 and Lys-351 together coordinate UDP-N-acetyl-alpha-D-glucosamine. His-363 serves as the catalytic Proton acceptor. UDP-N-acetyl-alpha-D-glucosamine contacts are provided by Tyr-366 and Asn-377. Acetyl-CoA-binding positions include 386-387 (NY), Ala-423, and Arg-440.

The protein in the N-terminal section; belongs to the N-acetylglucosamine-1-phosphate uridyltransferase family. This sequence in the C-terminal section; belongs to the transferase hexapeptide repeat family. As to quaternary structure, homotrimer. Mg(2+) is required as a cofactor.

The protein localises to the cytoplasm. It carries out the reaction alpha-D-glucosamine 1-phosphate + acetyl-CoA = N-acetyl-alpha-D-glucosamine 1-phosphate + CoA + H(+). The catalysed reaction is N-acetyl-alpha-D-glucosamine 1-phosphate + UTP + H(+) = UDP-N-acetyl-alpha-D-glucosamine + diphosphate. It functions in the pathway nucleotide-sugar biosynthesis; UDP-N-acetyl-alpha-D-glucosamine biosynthesis; N-acetyl-alpha-D-glucosamine 1-phosphate from alpha-D-glucosamine 6-phosphate (route II): step 2/2. It participates in nucleotide-sugar biosynthesis; UDP-N-acetyl-alpha-D-glucosamine biosynthesis; UDP-N-acetyl-alpha-D-glucosamine from N-acetyl-alpha-D-glucosamine 1-phosphate: step 1/1. Its pathway is bacterial outer membrane biogenesis; LPS lipid A biosynthesis. Its function is as follows. Catalyzes the last two sequential reactions in the de novo biosynthetic pathway for UDP-N-acetylglucosamine (UDP-GlcNAc). The C-terminal domain catalyzes the transfer of acetyl group from acetyl coenzyme A to glucosamine-1-phosphate (GlcN-1-P) to produce N-acetylglucosamine-1-phosphate (GlcNAc-1-P), which is converted into UDP-GlcNAc by the transfer of uridine 5-monophosphate (from uridine 5-triphosphate), a reaction catalyzed by the N-terminal domain. The chain is Bifunctional protein GlmU from Listeria monocytogenes serotype 4b (strain CLIP80459).